The following is a 281-amino-acid chain: Small ribosomal subunit protein uS2 (281 aa).

Positions 229-281 are disordered; that stretch reads RSGANKTEGEAAEQPMAAWEKELLTNEAPAEASAEAAAPAAAEGETAEAPKAE. Positions 255–275 are enriched in low complexity; that stretch reads EAPAEASAEAAAPAAAEGETA.

It belongs to the universal ribosomal protein uS2 family.

The polypeptide is Small ribosomal subunit protein uS2 (Bifidobacterium longum subsp. infantis (strain ATCC 15697 / DSM 20088 / JCM 1222 / NCTC 11817 / S12)).